We begin with the raw amino-acid sequence, 84 residues long: Sulfur carrier protein TusA (84 aa).

C19 (cysteine persulfide intermediate) is an active-site residue.

Belongs to the sulfur carrier protein TusA family. In terms of assembly, interacts with IscS.

The protein localises to the cytoplasm. It functions in the pathway tRNA modification. Sulfur carrier protein involved in sulfur trafficking in the cell. Part of a sulfur-relay system required for 2-thiolation during synthesis of 2-thiouridine of the modified wobble base 5-methylaminomethyl-2-thiouridine (mnm(5)s(2)U) in tRNA. Interacts with IscS and stimulates its cysteine desulfurase activity. Accepts an activated sulfur from IscS, which is then transferred to TusD, and thus determines the direction of sulfur flow from IscS to 2-thiouridine formation. Also appears to be involved in sulfur transfer for the biosynthesis of molybdopterin. This is Sulfur carrier protein TusA from Photorhabdus laumondii subsp. laumondii (strain DSM 15139 / CIP 105565 / TT01) (Photorhabdus luminescens subsp. laumondii).